We begin with the raw amino-acid sequence, 251 residues long: Cell division protein ZapD (251 aa).

This sequence belongs to the ZapD family. Interacts with FtsZ.

Its subcellular location is the cytoplasm. Cell division factor that enhances FtsZ-ring assembly. Directly interacts with FtsZ and promotes bundling of FtsZ protofilaments, with a reduction in FtsZ GTPase activity. The sequence is that of Cell division protein ZapD from Burkholderia vietnamiensis (strain G4 / LMG 22486) (Burkholderia cepacia (strain R1808)).